Reading from the N-terminus, the 336-residue chain is Adenylate isopentenyltransferase 3, chloroplastic (336 aa).

The N-terminal 55 residues, 1–55, are a transit peptide targeting the chloroplast; the sequence is MIMKISMAMCKQPLPPSPTLDFPPARFGPNMLTLNPYGPKDKVVVIMGATGTGKS. Residue 48 to 55 coordinates ATP; it reads GATGTGKS. The residue at position 333 (C333) is a Cysteine methyl ester. C333 carries the S-farnesyl cysteine lipid modification. The propeptide at 334–336 is removed in mature form; the sequence is LVA.

Belongs to the IPP transferase family. Post-translationally, farnesylated. Expressed the phloem companion cells.

It is found in the plastid. Its subcellular location is the chloroplast. It localises to the nucleus membrane. The protein localises to the cytoplasm. The enzyme catalyses dimethylallyl diphosphate + ADP = N(6)-(dimethylallyl)adenosine 5'-diphosphate + diphosphate. It carries out the reaction dimethylallyl diphosphate + ATP = N(6)-(dimethylallyl)adenosine 5'-triphosphate + diphosphate. Its function is as follows. Involved in cytokinin biosynthesis. Catalyzes the transfer of an isopentenyl group from dimethylallyl diphosphate (DMAPP) to ATP and ADP. The chain is Adenylate isopentenyltransferase 3, chloroplastic (IPT3) from Arabidopsis thaliana (Mouse-ear cress).